Consider the following 256-residue polypeptide: ATP synthase peripheral stalk subunit b, mitochondrial (256 aa).

A mitochondrion-targeting transit peptide spans 1–42; that stretch reads MLSRVVLSAAATAAPSLKNAAFLGPGVLQATRTFHTGQPHLV. Lysine 131 is modified (N6-succinyllysine). N6-acetyllysine is present on residues lysine 139, lysine 154, lysine 162, lysine 221, lysine 233, and lysine 244.

Belongs to the eukaryotic ATPase B chain family. In terms of assembly, component of the ATP synthase complex composed at least of ATP5F1A/subunit alpha, ATP5F1B/subunit beta, ATP5MC1/subunit c (homooctomer), MT-ATP6/subunit a, MT-ATP8/subunit 8, ATP5ME/subunit e, ATP5MF/subunit f, ATP5MG/subunit g, ATP5MK/subunit k, ATP5MJ/subunit j, ATP5F1C/subunit gamma, ATP5F1D/subunit delta, ATP5F1E/subunit epsilon, ATP5PF/subunit F6, ATP5PB/subunit b, ATP5PD/subunit d, ATP5PO/subunit OSCP. ATP synthase complex consists of a soluble F(1) head domain (subunits alpha(3) and beta(3)) - the catalytic core - and a membrane F(0) domain - the membrane proton channel (subunits c, a, 8, e, f, g, k and j). These two domains are linked by a central stalk (subunits gamma, delta, and epsilon) rotating inside the F1 region and a stationary peripheral stalk (subunits F6, b, d, and OSCP).

Its subcellular location is the mitochondrion. It localises to the mitochondrion inner membrane. Its function is as follows. Subunit b, of the mitochondrial membrane ATP synthase complex (F(1)F(0) ATP synthase or Complex V) that produces ATP from ADP in the presence of a proton gradient across the membrane which is generated by electron transport complexes of the respiratory chain. ATP synthase complex consist of a soluble F(1) head domain - the catalytic core - and a membrane F(1) domain - the membrane proton channel. These two domains are linked by a central stalk rotating inside the F(1) region and a stationary peripheral stalk. During catalysis, ATP synthesis in the catalytic domain of F(1) is coupled via a rotary mechanism of the central stalk subunits to proton translocation. In vivo, can only synthesize ATP although its ATP hydrolase activity can be activated artificially in vitro. Part of the complex F(0) domain. Part of the complex F(0) domain and the peripheric stalk, which acts as a stator to hold the catalytic alpha(3)beta(3) subcomplex and subunit a/ATP6 static relative to the rotary elements. This is ATP synthase peripheral stalk subunit b, mitochondrial from Homo sapiens (Human).